A 422-amino-acid polypeptide reads, in one-letter code: Blood group Rh(D) polypeptide (422 aa).

Helical transmembrane passes span 13 to 33, 43 to 63, 76 to 96, 113 to 135, 137 to 159, 170 to 190, 215 to 235, 244 to 266, 272 to 292, 294 to 314, 335 to 355, and 372 to 392; these read LPLW…FLIG, FMAI…GFGF, VAFS…LDYF, FLSI…AVLG, VNLV…IRVA, IIMM…AWWL, LFAM…NSAL, AVFN…SALS, INMV…GAPS, LISS…ISIW, YTFG…HIIA, and VGAL…TGCL.

This sequence belongs to the ammonium transporter (TC 2.A.49) family. Rh subfamily. In terms of processing, palmitoylated.

The protein resides in the cell membrane. May be part of an oligomeric complex which is likely to have a transport or channel function in the erythrocyte membrane. The polypeptide is Blood group Rh(D) polypeptide (Rhd) (Rattus norvegicus (Rat)).